The primary structure comprises 165 residues: MSLSKNSHKEDQLEEKVLVVNRCSKVVKGGRKFSFSALILVGDGKGRLGYGFAKANELTDAIRKGGEAAKKNLMKIEALEDGSIPHEVLVHHDGAQLLLKPAKPGTGIVAGSRIRLILEMAGIKDIVAKSFGSNNPMNQVKAAFKALTGLSPRKDLLRRGAAIND.

In terms of domain architecture, S5 DRBM spans 13-76 (LEEKVLVVNR…EAAKKNLMKI (64 aa)).

The protein belongs to the universal ribosomal protein uS5 family. In terms of assembly, part of the 30S ribosomal subunit. Contacts proteins S4 and S8.

Its function is as follows. With S4 and S12 plays an important role in translational accuracy. Functionally, located at the back of the 30S subunit body where it stabilizes the conformation of the head with respect to the body. In Chlamydia pneumoniae (Chlamydophila pneumoniae), this protein is Small ribosomal subunit protein uS5.